An 87-amino-acid chain; its full sequence is Mu-conotoxin cal12b (87 aa).

Residues 1-19 form the signal peptide; that stretch reads MKLTCVLVVLLLLLPYGDL. A propeptide spanning residues 20–42 is cleaved from the precursor; it reads ITNNYIRGAARKVTPWRRNLKTR. Intrachain disulfides connect Cys45/Cys58, Cys53/Cys70, Cys60/Cys75, and Cys69/Cys81. Trp59 is modified (6'-bromotryptophan). A 4-hydroxyproline modification is found at Pro65. 6'-bromotryptophan is present on residues Trp79 and Trp80. A 4-hydroxyproline modification is found at Pro82. Trp86 bears the 6'-bromotryptophan mark.

In terms of tissue distribution, expressed by the venom duct.

The protein resides in the secreted. In terms of biological role, mu-conotoxins block voltage-gated sodium channels. This toxin reversibly blocks voltage-gated sodium channel in cephalopods (tested on squid giant-fiber-lobe neurons) with an inhibitor constant (Ki) of 15 nmol/l, with no alteration in the voltage dependence of sodium conductance or on the kinetics of inactivation. Has no effect on sodium channels of the two gastropod S.luhuanus and A.californica (which are not natural prey). The protein is Mu-conotoxin cal12b of Californiconus californicus (California cone).